We begin with the raw amino-acid sequence, 589 residues long: WD repeat-containing protein 26 homolog (589 aa).

The segment at 1–57 (MGVVEDTEPPLKRAKRLADEPNGFSANSSVRGSSVNSNSLGDLMARPLPSQGDDETI) is disordered. The segment covering 25-39 (SANSSVRGSSVNSNS) has biased composition (low complexity). Residues 64–96 (RKSEFVRIITRALYSLGYDKTGAMLEEESGISL) enclose the LisH domain. The 58-residue stretch at 97 to 154 (HNSTIKLFLQQVKDGKWDQSVKTLHRIGFPDEKAVKAASFLLLEQKFLEFLKVEKIAD) folds into the CTLH domain. WD repeat units follow at residues 272-311 (SHTD…HISL), 317-358 (GHHK…HMYE), 360-398 (GGIS…KECW), 401-440 (QRTQ…ERLI), 442-480 (EEDM…KIVS), 484-526 (GHKR…LIVE), and 529-569 (GHAG…QQNQ).

As to quaternary structure, interacts with RANBPM. Expressed in roots, leaves and flowers.

It localises to the cytoplasm. Acts as a component involved in the crosstalk regulation between light, hormone and abiotic stress response. This chain is WD repeat-containing protein 26 homolog, found in Arabidopsis thaliana (Mouse-ear cress).